A 382-amino-acid chain; its full sequence is Serine protease 43 (382 aa).

An N-terminal signal peptide occupies residues 1 to 27; it reads MGGFCGADRGGFLALLVWLQLLQPLFS. Positions 30–97 are disordered; the sequence is YKPREDSGVM…SGTTTKITLE (68 aa). 2 stretches are compositionally biased toward polar residues: residues 56–68 and 85–95; these read AQQSRLKSLSISH and GSPSGTTTKIT. A Peptidase S1 domain is found at 119-355; that stretch reads VDPGSLSAGR…YNEWVSYVLS (237 aa). The cysteines at positions 144 and 160 are disulfide-linked. Residues His159 and Asp205 each act as charge relay system in the active site. 3 cysteine pairs are disulfide-bonded: Cys239/Cys313, Cys272/Cys293, and Cys303/Cys331. Residue Ser307 is the Charge relay system of the active site. The helical transmembrane segment at 362 to 382 threads the bilayer; the sequence is PMGVLVLYLSLVFPLALLVAL.

It belongs to the peptidase S1 family. As to expression, testis-specific. Expressed in germ cells at the stages from late pachytene spermatocytes to spermatids.

The protein resides in the cell membrane. In terms of biological role, plays a role in spermatogenesis. Involved in germ cell survival during meiosis. Lacks protease activity in vitro. The sequence is that of Serine protease 43 from Mus musculus (Mouse).